Here is a 217-residue protein sequence, read N- to C-terminus: Transcriptional regulator NovE (217 aa).

The disordered stretch occupies residues 1 to 41 (MVASGRTASKGRGNGATPVRPTAGDATPVDSGQPSDTTYGG).

Functionally, transcription regulator that specifically regulates expression of genes involved in the novobiocin biosynthesis pathway. Probably acts as a positive regulator of transcription. Does not bind DNA. In Streptomyces niveus (Streptomyces spheroides), this protein is Transcriptional regulator NovE (novE).